Consider the following 138-residue polypeptide: Large ribosomal subunit protein uL16 (138 aa).

It belongs to the universal ribosomal protein uL16 family. In terms of assembly, part of the 50S ribosomal subunit.

Binds 23S rRNA and is also seen to make contacts with the A and possibly P site tRNAs. In Gluconobacter oxydans (strain 621H) (Gluconobacter suboxydans), this protein is Large ribosomal subunit protein uL16.